The sequence spans 288 residues: 33 kDa chaperonin (288 aa).

Disulfide bonds link C236–C238 and C269–C272.

The protein belongs to the HSP33 family. Post-translationally, under oxidizing conditions two disulfide bonds are formed involving the reactive cysteines. Under reducing conditions zinc is bound to the reactive cysteines and the protein is inactive.

It localises to the cytoplasm. Its function is as follows. Redox regulated molecular chaperone. Protects both thermally unfolding and oxidatively damaged proteins from irreversible aggregation. Plays an important role in the bacterial defense system toward oxidative stress. The polypeptide is 33 kDa chaperonin (Lactococcus lactis subsp. lactis (strain IL1403) (Streptococcus lactis)).